The following is a 302-amino-acid chain: UDP-N-acetylenolpyruvoylglucosamine reductase (302 aa).

The 167-residue stretch at 30-196 (IGGPADLFVE…IAATLEMKKG (167 aa)) folds into the FAD-binding PCMH-type domain. Arg174 is an active-site residue. The Proton donor role is filled by Ser225. Residue Glu295 is part of the active site.

The protein belongs to the MurB family. FAD is required as a cofactor.

Its subcellular location is the cytoplasm. The catalysed reaction is UDP-N-acetyl-alpha-D-muramate + NADP(+) = UDP-N-acetyl-3-O-(1-carboxyvinyl)-alpha-D-glucosamine + NADPH + H(+). It participates in cell wall biogenesis; peptidoglycan biosynthesis. Its function is as follows. Cell wall formation. This chain is UDP-N-acetylenolpyruvoylglucosamine reductase, found in Anoxybacillus flavithermus (strain DSM 21510 / WK1).